Here is a 242-residue protein sequence, read N- to C-terminus: Proteasome subunit alpha (242 aa).

The protein belongs to the peptidase T1A family. As to quaternary structure, the 20S proteasome core is composed of 14 alpha and 14 beta subunits that assemble into four stacked heptameric rings, resulting in a barrel-shaped structure. The two inner rings, each composed of seven catalytic beta subunits, are sandwiched by two outer rings, each composed of seven alpha subunits. The catalytic chamber with the active sites is on the inside of the barrel. Has a gated structure, the ends of the cylinder being occluded by the N-termini of the alpha-subunits. Is capped at one or both ends by the proteasome regulatory ATPase, PAN.

The protein resides in the cytoplasm. Its activity is regulated as follows. The formation of the proteasomal ATPase PAN-20S proteasome complex, via the docking of the C-termini of PAN into the intersubunit pockets in the alpha-rings, triggers opening of the gate for substrate entry. Interconversion between the open-gate and close-gate conformations leads to a dynamic regulation of the 20S proteasome proteolysis activity. Its function is as follows. Component of the proteasome core, a large protease complex with broad specificity involved in protein degradation. This Sulfolobus acidocaldarius (strain ATCC 33909 / DSM 639 / JCM 8929 / NBRC 15157 / NCIMB 11770) protein is Proteasome subunit alpha.